A 497-amino-acid polypeptide reads, in one-letter code: DNA-dependent metalloprotease SPRTN (497 aa).

Methionine 1 is subject to N-acetylmethionine. Residues 46-213 (LQALFLQFND…KTCGGTYIKI (168 aa)) enclose the SprT-like domain. Histidine 112 contacts Zn(2+). The active site involves glutamate 113. Residues histidine 116 and histidine 131 each coordinate Zn(2+). The residue at position 231 (lysine 231) is an N6-acetyllysine. The short motif at 254 to 262 (FSGKGYVLG) is the SHP-box element. A Phosphoserine modification is found at serine 269. A Glycyl lysine isopeptide (Lys-Gly) (interchain with G-Cter in SUMO2) cross-link involves residue lysine 304. A PIP-box motif is present at residues 326–333 (QSVLSSYF). Residue lysine 342 forms a Glycyl lysine isopeptide (Lys-Gly) (interchain with G-Cter in SUMO2); alternate linkage. Residue lysine 342 forms a Glycyl lysine isopeptide (Lys-Gly) (interchain with G-Cter in ubiquitin); alternate linkage. The tract at residues 344–459 (FRNVNGSPVK…ASAPQSLSSQ (116 aa)) is disordered. A compositionally biased stretch (polar residues) spans 347 to 356 (VNGSPVKNGT). Lysine 362 is covalently cross-linked (Glycyl lysine isopeptide (Lys-Gly) (interchain with G-Cter in SUMO2)). Residues 383 to 404 (TSKVTAPASATVTSAAGTSATI) show a composition bias toward low complexity. Position 384 is a phosphoserine (serine 384). The short motif at 413–424 (DQFLNKRPRLED) is the Nuclear localization signal element. Positions 420–432 (PRLEDRTALDTIK) are enriched in basic and acidic residues. Residue lysine 432 forms a Glycyl lysine isopeptide (Lys-Gly) (interchain with G-Cter in SUMO2) linkage. Residues 442 to 459 (RSSSQPTAASAPQSLSSQ) show a composition bias toward low complexity. A UBZ4-type zinc finger spans residues 462–489 (LVNCPVCQGVVVESQINEHLDRCLEGNK). 4 residues coordinate Zn(2+): cysteine 465, cysteine 468, histidine 480, and cysteine 484.

This sequence belongs to the Spartan family. Homodimer. Interacts (VIA PIP-box) with PCNA (when ubiquitinated). Interacts (via its SHP-box) with VCP/p97. Interacts with RAD18. Interacts with KCTD13 and POLD3. Zn(2+) is required as a cofactor. In terms of processing, autocatalytically cleaved in response to double-stranded DNA-binding: autocatalytic cleavage takes place in trans and leads to inactivation. Monoubiquitinated; monoubiquitination promotes exclusion from chromatin. Deubiquitinated by VCPIP1: deubiquitination is required for subsequent acetylation and recruitment to chromatin and DNA damage sites. Post-translationally, acetylated following deubiquitination by VCPIP1, leading to recruitment to chromatin and DNA damage sites. In terms of processing, phosphorylation by CHEK1 promotes recruitment to chromatin.

The protein localises to the nucleus. It is found in the chromosome. Its activity is regulated as follows. DNA-binding activates the protease activity: single-stranded DNA-binding specifically activates ability to cleave covalent DNA-protein cross-links (DPCs). In contrast, double-stranded DNA-binding specifically activates autocatalytic cleavage, and subsequent inactivation. Functionally, DNA-dependent metalloendopeptidase that mediates the proteolytic cleavage of covalent DNA-protein cross-links (DPCs) during DNA synthesis, thereby playing a key role in maintaining genomic integrity. DPCs are highly toxic DNA lesions that interfere with essential chromatin transactions, such as replication and transcription, and which are induced by reactive agents, such as UV light or formaldehyde. Associates with the DNA replication machinery and specifically removes DPCs during DNA synthesis. Catalyzes proteolytic cleavage of the HMCES DNA-protein cross-link following unfolding by the BRIP1/FANCJ helicase. Acts as a pleiotropic protease for DNA-binding proteins cross-linked with DNA, such as TOP1, TOP2A, histones H3 and H4. Mediates degradation of DPCs that are not ubiquitinated, while it is not able to degrade ubiquitinated DPCs. SPRTN activation requires polymerase collision with DPCs followed by helicase bypass of DPCs. Involved in recruitment of VCP/p97 to sites of DNA damage. Also acts as an activator of CHEK1 during normal DNA replication by mediating proteolytic cleavage of CHEK1, thereby promoting CHEK1 removal from chromatin and subsequent activation. Does not activate CHEK1 in response to DNA damage. May also act as a 'reader' of ubiquitinated PCNA: recruited to sites of UV damage and interacts with ubiquitinated PCNA and RAD18, the E3 ubiquitin ligase that monoubiquitinates PCNA. Facilitates chromatin association of RAD18 and is required for efficient PCNA monoubiquitination, promoting a feed-forward loop to enhance PCNA ubiquitination and translesion DNA synthesis. In Mus musculus (Mouse), this protein is DNA-dependent metalloprotease SPRTN.